Here is a 422-residue protein sequence, read N- to C-terminus: Enolase (422 aa).

A (2R)-2-phosphoglycerate-binding site is contributed by glutamine 163. The active-site Proton donor is the glutamate 205. Residues aspartate 242, glutamate 283, and aspartate 310 each contribute to the Mg(2+) site. (2R)-2-phosphoglycerate is bound by residues lysine 335, arginine 364, serine 365, and lysine 386. The active-site Proton acceptor is lysine 335.

The protein belongs to the enolase family. Requires Mg(2+) as cofactor.

It localises to the cytoplasm. It is found in the secreted. The protein localises to the cell surface. It carries out the reaction (2R)-2-phosphoglycerate = phosphoenolpyruvate + H2O. The protein operates within carbohydrate degradation; glycolysis; pyruvate from D-glyceraldehyde 3-phosphate: step 4/5. In terms of biological role, catalyzes the reversible conversion of 2-phosphoglycerate (2-PG) into phosphoenolpyruvate (PEP). It is essential for the degradation of carbohydrates via glycolysis. The sequence is that of Enolase from Bdellovibrio bacteriovorus (strain ATCC 15356 / DSM 50701 / NCIMB 9529 / HD100).